The primary structure comprises 230 residues: Probable fimbrial chaperone SfmC (230 aa).

Positions 1-23 (MMTKIKLLMLIIFYLIISASAHA) are cleaved as a signal peptide.

The protein belongs to the periplasmic pilus chaperone family.

It is found in the periplasm. Its function is as follows. Part of the sfmACDHF fimbrial operon. Could contribute to adhesion to various surfaces in specific environmental niches. Increases adhesion to eukaryotic T24 bladder epithelial cells in the absence of fim genes. The polypeptide is Probable fimbrial chaperone SfmC (sfmC) (Escherichia coli (strain K12)).